The following is a 389-amino-acid chain: Probable nitrate transporter NarT (389 aa).

Transmembrane regions (helical) follow at residues 14-34 (TLSL…MPFI), 45-65 (ISII…PFGY), 69-89 (IVGA…PIFF), 97-117 (GMLM…SVGV), 139-159 (GNIG…IIGW), 161-181 (TTVR…FIFG), 211-231 (WYFI…NYLV), 246-266 (GVFI…GDKF), 268-288 (AVKV…ILGI), 294-314 (LFTV…GLIF), 331-351 (IVSM…TYVA), and 353-373 (LTGS…IALF).

Belongs to the major facilitator superfamily. Nitrate/nitrite porter (TC 2.A.1.8) family.

It localises to the cell membrane. Its function is as follows. Probably required for nitrate uptake under anoxic conditions. Also possibly involved in excretion of nitrite produced by the dissimilatory reduction of nitrate. The protein is Probable nitrate transporter NarT (narT) of Staphylococcus aureus (strain MRSA252).